A 672-amino-acid polypeptide reads, in one-letter code: Flap endonuclease 1 (672 aa).

The interval 1 to 106 (MGIKGLIGFL…QTLAKRKLLR (106 aa)) is N-domain. A Mg(2+)-binding site is contributed by Asp34. Residues Arg47 and Arg72 each contribute to the DNA site. Positions 88, 160, 162, 181, and 183 each coordinate Mg(2+). Residues 124–252 (AIRKYVGRTV…KTAYNLIKKH (129 aa)) form an I-domain region. DNA is bound at residue Glu160. Residues Gly230 and Asp232 each contribute to the DNA site. Asp232 provides a ligand contact to Mg(2+). The tract at residues 327 to 335 (TQLSLKSFF) is interaction with PCNA. Residues 361 to 436 (VESAVDSTSD…DAKKRNKRVP (76 aa)) are disordered. Basic and acidic residues predominate over residues 370-382 (DDGKDEVPSDDKV).

This sequence belongs to the XPG/RAD2 endonuclease family. FEN1 subfamily. As to quaternary structure, interacts with PCNA. Three molecules of FEN1 bind to one PCNA trimer with each molecule binding to one PCNA monomer. PCNA stimulates the nuclease activity without altering cleavage specificity. The cofactor is Mg(2+). Post-translationally, phosphorylated. Phosphorylation upon DNA damage induces relocalization to the nuclear plasma.

The protein localises to the nucleus. Its subcellular location is the nucleolus. It is found in the nucleoplasm. It localises to the mitochondrion. Structure-specific nuclease with 5'-flap endonuclease and 5'-3' exonuclease activities involved in DNA replication and repair. During DNA replication, cleaves the 5'-overhanging flap structure that is generated by displacement synthesis when DNA polymerase encounters the 5'-end of a downstream Okazaki fragment. It enters the flap from the 5'-end and then tracks to cleave the flap base, leaving a nick for ligation. Also involved in the long patch base excision repair (LP-BER) pathway, by cleaving within the apurinic/apyrimidinic (AP) site-terminated flap. Acts as a genome stabilization factor that prevents flaps from equilibrating into structures that lead to duplications and deletions. Also possesses 5'-3' exonuclease activity on nicked or gapped double-stranded DNA, and exhibits RNase H activity. Also involved in replication and repair of rDNA and in repairing mitochondrial DNA. The polypeptide is Flap endonuclease 1 (Babesia bovis).